A 213-amino-acid polypeptide reads, in one-letter code: Thiamine import ATP-binding protein ThiQ (213 aa).

An ABC transporter domain is found at 1 to 212 (MIELNVTFDY…EQGRIVADQL (212 aa)). 31–38 (GESGAGKS) contributes to the ATP binding site.

It belongs to the ABC transporter superfamily. Thiamine importer (TC 3.A.1.19.1) family. The complex is composed of two ATP-binding proteins (ThiQ), two transmembrane proteins (ThiP) and a solute-binding protein (ThiB).

It is found in the cell inner membrane. The enzyme catalyses thiamine(out) + ATP + H2O = thiamine(in) + ADP + phosphate + H(+). Its function is as follows. Part of the ABC transporter complex ThiBPQ involved in thiamine import. Responsible for energy coupling to the transport system. In Haemophilus ducreyi (strain 35000HP / ATCC 700724), this protein is Thiamine import ATP-binding protein ThiQ.